Here is a 311-residue protein sequence, read N- to C-terminus: Eukaryotic translation initiation factor 3 subunit E (311 aa).

The 181-residue stretch at 100 to 280 (VYYNYPKGRD…MGVKSVSIHE (181 aa)) folds into the PCI domain.

This sequence belongs to the eIF-3 subunit E family. In terms of assembly, component of the eukaryotic translation initiation factor 3 (eIF-3) complex.

It localises to the cytoplasm. Functionally, component of the eukaryotic translation initiation factor 3 (eIF-3) complex, which is involved in protein synthesis of a specialized repertoire of mRNAs and, together with other initiation factors, stimulates binding of mRNA and methionyl-tRNAi to the 40S ribosome. The eIF-3 complex specifically targets and initiates translation of a subset of mRNAs involved in cell proliferation. The protein is Eukaryotic translation initiation factor 3 subunit E of Caenorhabditis briggsae.